The chain runs to 414 residues: DNA primase small subunit PriS (414 aa).

Active-site residues include D98, D100, and D312.

It belongs to the eukaryotic-type primase small subunit family. As to quaternary structure, heterodimer of a small subunit (PriS) and a large subunit (PriL). Requires Mg(2+) as cofactor. The cofactor is Mn(2+).

Catalytic subunit of DNA primase, an RNA polymerase that catalyzes the synthesis of short RNA molecules used as primers for DNA polymerase during DNA replication. The small subunit contains the primase catalytic core and has DNA synthesis activity on its own. Binding to the large subunit stabilizes and modulates the activity, increasing the rate of DNA synthesis while decreasing the length of the DNA fragments, and conferring RNA synthesis capability. The DNA polymerase activity may enable DNA primase to also catalyze primer extension after primer synthesis. May also play a role in DNA repair. This chain is DNA primase small subunit PriS, found in Methanosarcina acetivorans (strain ATCC 35395 / DSM 2834 / JCM 12185 / C2A).